Here is a 717-residue protein sequence, read N- to C-terminus: Serine/threonine-protein kinase STE11 (717 aa).

Positions 20-84 constitute an SAM domain; that stretch reads NDLPFVQLFL…LRKSKSFQRD (65 aa). A Phosphoserine modification is found at S323. Positions 415–712 constitute a Protein kinase domain; that stretch reads WLKGACIGSG…ALELLQHPWL (298 aa). Residues 421–429 and K444 contribute to the ATP site; that span reads IGSGSFGSV. A compositionally biased stretch (polar residues) spans 452-466; sequence NIGVPTDNNKQANSD. The interval 452–481 is disordered; that stretch reads NIGVPTDNNKQANSDENNEQEEQQEKIEDV. At S465 the chain carries Phosphoserine. Residue D579 is the Proton acceptor of the active site.

This sequence belongs to the protein kinase superfamily. STE Ser/Thr protein kinase family. MAP kinase kinase kinase subfamily. Homodimer. Interacts (via SAM domain) with STE50 (via SAM domain). Interacts with PBS2 and SHO1.

It carries out the reaction L-seryl-[protein] + ATP = O-phospho-L-seryl-[protein] + ADP + H(+). It catalyses the reaction L-threonyl-[protein] + ATP = O-phospho-L-threonyl-[protein] + ADP + H(+). In terms of biological role, serine/threonine protein kinase required for cell-type-specific transcription and signal transduction in yeast. It is thought that it phosphorylates the STE7 protein kinase which itself, phosphorylates the FUS3 and or KSS1 kinases. This Saccharomyces cerevisiae (strain ATCC 204508 / S288c) (Baker's yeast) protein is Serine/threonine-protein kinase STE11 (STE11).